A 232-amino-acid polypeptide reads, in one-letter code: Flagellar L-ring protein (232 aa).

Positions 1-21 (MQKNAAHTYAISSLLVLSLTG) are cleaved as a signal peptide. A lipid anchor (N-palmitoyl cysteine) is attached at C22. A lipid anchor (S-diacylglycerol cysteine) is attached at C22.

Belongs to the FlgH family. In terms of assembly, the basal body constitutes a major portion of the flagellar organelle and consists of four rings (L,P,S, and M) mounted on a central rod.

It is found in the cell outer membrane. The protein localises to the bacterial flagellum basal body. In terms of biological role, assembles around the rod to form the L-ring and probably protects the motor/basal body from shearing forces during rotation. The sequence is that of Flagellar L-ring protein from Escherichia coli O7:K1 (strain IAI39 / ExPEC).